The chain runs to 607 residues: Elongation factor 4 (607 aa).

In terms of domain architecture, tr-type G spans 11-193 (EKIRNFSIIA…QIVEKVPAPT (183 aa)). GTP-binding positions include 23–28 (DHGKST) and 140–143 (NKID).

Belongs to the TRAFAC class translation factor GTPase superfamily. Classic translation factor GTPase family. LepA subfamily.

It localises to the cell membrane. It carries out the reaction GTP + H2O = GDP + phosphate + H(+). Required for accurate and efficient protein synthesis under certain stress conditions. May act as a fidelity factor of the translation reaction, by catalyzing a one-codon backward translocation of tRNAs on improperly translocated ribosomes. Back-translocation proceeds from a post-translocation (POST) complex to a pre-translocation (PRE) complex, thus giving elongation factor G a second chance to translocate the tRNAs correctly. Binds to ribosomes in a GTP-dependent manner. In Streptococcus pneumoniae (strain P1031), this protein is Elongation factor 4.